Reading from the N-terminus, the 850-residue chain is Pre-mRNA-splicing factor SYF1 (850 aa).

12 HAT repeats span residues 10–42 (GLLC…FKSS), 46–78 (CTFQ…VVLQ), 90–122 (SEIL…FLVE), 126–160 (YEIT…FADD), 208–247 (GDVK…LLVN), 408–442 (AALR…VYAS), 444–480 (NDVK…LFVK), 500–531 (GKFD…LLES), 574–609 (NFYE…KIIK), 612–653 (LNIE…QYEQ), 708–744 (NDHN…FETE), and 746–782 (MEFN…FELN).

It belongs to the crooked-neck family. Associated with the spliceosome.

Its subcellular location is the nucleus. Its function is as follows. Involved in pre-mRNA splicing and cell cycle progression. The chain is Pre-mRNA-splicing factor SYF1 (SYF1) from Debaryomyces hansenii (strain ATCC 36239 / CBS 767 / BCRC 21394 / JCM 1990 / NBRC 0083 / IGC 2968) (Yeast).